The chain runs to 507 residues: Maturase K (507 aa).

The protein belongs to the intron maturase 2 family. MatK subfamily.

The protein localises to the plastid. The protein resides in the chloroplast. Its function is as follows. Usually encoded in the trnK tRNA gene intron. Probably assists in splicing its own and other chloroplast group II introns. This is Maturase K from Nymphaea alba (White water-lily).